Reading from the N-terminus, the 216-residue chain is MEKFNVHTGVVAPLDRENVDTDAIIPKQFLKSIKRTGFGPNAFDEWRYLDHGEPGQDNSKRPLNPDFVLNQPRYQRASVLLARKNFGCGSSREHAPWALQQYGFRAIIAPSFADIFFNNCYKNGLLPIVLTEQQVDHLFNETYAFNGYQLTIDLDAQVVRAPDGREYPFEITAFRKYCLLNGFDDIGLTLRHAEKIRQFEAERLAKQPWLNNKLVG.

This sequence belongs to the LeuD family. LeuD type 1 subfamily. As to quaternary structure, heterodimer of LeuC and LeuD.

The catalysed reaction is (2R,3S)-3-isopropylmalate = (2S)-2-isopropylmalate. It functions in the pathway amino-acid biosynthesis; L-leucine biosynthesis; L-leucine from 3-methyl-2-oxobutanoate: step 2/4. In terms of biological role, catalyzes the isomerization between 2-isopropylmalate and 3-isopropylmalate, via the formation of 2-isopropylmaleate. In Burkholderia thailandensis (strain ATCC 700388 / DSM 13276 / CCUG 48851 / CIP 106301 / E264), this protein is 3-isopropylmalate dehydratase small subunit.